The chain runs to 403 residues: MALRSARGDGPTSGRWDGGAEKGDFNAKRKKKVAEIYQALNSEPTDVAALRRMAISEGGLLTDEIRRKVWPKLLNVNTNDPPPISGKNLRQMSKDYQQVLLDVRRSLRRFPPGMPEEQREGLQEELIDIILLILERNPQLHYYQGYHDIVVTFLLVLGERLATSLVEKLSTHHLRDFMDPTMDNTKHILNYLMPIIDQVNPELHDFMQSAEVGTIFALSWLITWFGHVLSDFRHVVRLYDFFLACHPLMPIYFAAVIVLYREQEVLDCDCDMASVHHLLSQIPQDLPYETLISRAGDLFVQFPPSELAREAAAQPQAEKTAASTFKDFELASAQQRPDMVLRQRFRGLLRPDERTKDVLTKPRTNRFVKLAVMGLTVALGAAALAVVKSALEWAPKFQLQLFP.

Residues Met-1 to Arg-29 are disordered. The span at Gly-18–Ala-27 shows a compositional bias: basic and acidic residues. In terms of domain architecture, Rab-GAP TBC spans Leu-60–His-246. A run of 2 helical transmembrane segments spans residues Leu-238 to Val-258 and Phe-367 to Val-387.

It localises to the membrane. In terms of biological role, GTPase-activating protein (GAP) specific for Rab1 and Rab2 small GTPase families for which it can accelerate the intrinsic GTP hydrolysis rate by more than five orders of magnitude. Also shows GAP activity for RAB18 GTPase. Promotes RAB18 dissociation from the endoplasmic reticulum (ER) membrane into the cytosol, probably through stimulating RAB18 GTP-hydrolysis. Involved in maintaining endoplasmic reticulum structure. The polypeptide is TBC1 domain family member 20 (TBC1D20) (Bos taurus (Bovine)).